The sequence spans 388 residues: Integrase (388 aa).

One can recognise a Core-binding (CB) domain in the interval 70 to 151 (YTVADAVNDW…CLNRAVKRAM (82 aa)). The Tyr recombinase domain occupies 173 to 379 (RPSKALTFAQ…VIQTGAVVMD (207 aa)). Residues Arg208, Lys249, Arg330, and His353 contribute to the active site. The O-(3'-phospho-DNA)-tyrosine intermediate role is filled by Tyr363.

This sequence belongs to the 'phage' integrase family.

Required for integration of pSAM2. This Streptomyces ambofaciens protein is Integrase (int).